Consider the following 542-residue polypeptide: MVDDSHNAPFDKTKFDEVLEALVGLKDNEGNPFDDIFEELPSKRYFPDYYQIIQKPICYKMMRNKAKTGKYLSMGDFYDDIRLMVSNAQTYNMPGSLVYECSVLIANTANSLESKDGTLNEEENEEMESSINEEHKPGTNEIDVPKVIQNILDALHEEKDEQGRFLIDIFIDLPSKRLYPDYYEIIKSPMTIKMLEKRFKKGEYTTLESFVKDLNQMFINAKTYNAPGSFVYEDAEKLSQLSSSLISSFSEQPKEHSPATSKHEPEETPASPTPSVSASTSRERSTSVAPSFITSDQAATPDVLKSEEAHVESFSKESEKDQTPIPEDVPSPMDTLSQANYGAFALIKSFPSTPVPDFLNFSHKSVMGRSTFNMPNFPEPKFFEDIPNTERCILSAFICSPPQLPLPNPLRMYLPCPSLNSTEVSVITLAPQHSFLNIVINLNPALALKSYTIITLLNGKRLGAGVSTPPSTLYALEGIKHTEEPIRTVYEAKLSVGLNCLEFVLGSTEPVEPPSIEPGLPASAYSRTVERERFVLMAYVQP.

Residues 6–116 enclose the Bromo 1 domain; the sequence is HNAPFDKTKF…NTANSLESKD (111 aa). Disordered regions lie at residues 114–139 and 246–327; these read SKDGTLNEEENEEMESSINEEHKPGT and ISSF…PIPE. A compositionally biased stretch (acidic residues) spans 119–128; that stretch reads LNEEENEEME. The 111-residue stretch at 139–249 folds into the Bromo 2 domain; the sequence is TNEIDVPKVI…QLSSSLISSF (111 aa). Residues 252–266 are compositionally biased toward basic and acidic residues; sequence QPKEHSPATSKHEPE. Residues serine 257, serine 271, serine 287, and serine 313 each carry the phosphoserine modification. The span at 268-280 shows a compositional bias: low complexity; sequence TPASPTPSVSAST. The span at 286-298 shows a compositional bias: polar residues; that stretch reads TSVAPSFITSDQA. The span at 304–322 shows a compositional bias: basic and acidic residues; it reads LKSEEAHVESFSKESEKDQ.

Component of the RSC complex composed of at least arp9, arp42, rsc1, rsc4, rsc7, rsc9, rsc58, sfh1, snf21, ssr1, ssr2, ssr3 and ssr4. The complex interacts with histone and histone variant components of centromeric chromatin.

It is found in the nucleus. In terms of biological role, component of the chromatin structure remodeling complex (RSC), which is involved in transcription regulation and nucleosome positioning. Controls particularly membrane and organelle development genes. The protein is Chromatin structure-remodeling complex subunit rsc4 (rsc4) of Schizosaccharomyces pombe (strain 972 / ATCC 24843) (Fission yeast).